The following is a 1099-amino-acid chain: DNA-directed RNA polymerase subunit beta (1099 aa).

The protein belongs to the RNA polymerase beta chain family. In plastids the minimal PEP RNA polymerase catalytic core is composed of four subunits: alpha, beta, beta', and beta''. When a (nuclear-encoded) sigma factor is associated with the core the holoenzyme is formed, which can initiate transcription.

It localises to the plastid. It is found in the chloroplast. It catalyses the reaction RNA(n) + a ribonucleoside 5'-triphosphate = RNA(n+1) + diphosphate. Functionally, DNA-dependent RNA polymerase catalyzes the transcription of DNA into RNA using the four ribonucleoside triphosphates as substrates. The sequence is that of DNA-directed RNA polymerase subunit beta from Bigelowiella natans (Pedinomonas minutissima).